The chain runs to 419 residues: UDP-N-acetylglucosamine 1-carboxyvinyltransferase (419 aa).

22–23 (KN) is a phosphoenolpyruvate binding site. A UDP-N-acetyl-alpha-D-glucosamine-binding site is contributed by R91. C115 acts as the Proton donor in catalysis. C115 carries the 2-(S-cysteinyl)pyruvic acid O-phosphothioketal modification. UDP-N-acetyl-alpha-D-glucosamine-binding positions include 120–124 (RPVDL), 160–163 (KVSV), D305, and I327.

The protein belongs to the EPSP synthase family. MurA subfamily.

The protein resides in the cytoplasm. It carries out the reaction phosphoenolpyruvate + UDP-N-acetyl-alpha-D-glucosamine = UDP-N-acetyl-3-O-(1-carboxyvinyl)-alpha-D-glucosamine + phosphate. Its pathway is cell wall biogenesis; peptidoglycan biosynthesis. Functionally, cell wall formation. Adds enolpyruvyl to UDP-N-acetylglucosamine. The protein is UDP-N-acetylglucosamine 1-carboxyvinyltransferase of Sodalis glossinidius (strain morsitans).